A 193-amino-acid polypeptide reads, in one-letter code: Potassium-transporting ATPase KdpC subunit (193 aa).

A helical membrane pass occupies residues 7–27 (PALVLFAALTLLTGVAYPLAV).

It belongs to the KdpC family. In terms of assembly, the system is composed of three essential subunits: KdpA, KdpB and KdpC.

The protein localises to the cell inner membrane. Part of the high-affinity ATP-driven potassium transport (or Kdp) system, which catalyzes the hydrolysis of ATP coupled with the electrogenic transport of potassium into the cytoplasm. This subunit acts as a catalytic chaperone that increases the ATP-binding affinity of the ATP-hydrolyzing subunit KdpB by the formation of a transient KdpB/KdpC/ATP ternary complex. This is Potassium-transporting ATPase KdpC subunit from Rhodospirillum rubrum (strain ATCC 11170 / ATH 1.1.1 / DSM 467 / LMG 4362 / NCIMB 8255 / S1).